The primary structure comprises 128 residues: Riboflavin kinase (128 aa).

12 to 17 (GKGEGK) contacts CDP. The Mg(2+) site is built by T41 and N43. Residues T97 and E105 each coordinate FMN. 110 to 113 (IKLR) is a CDP binding site.

This sequence belongs to the archaeal riboflavin kinase family. Mg(2+) is required as a cofactor.

The enzyme catalyses riboflavin + CTP = CDP + FMN + H(+). The protein operates within cofactor biosynthesis; FMN biosynthesis; FMN from riboflavin (CTP route): step 1/1. Catalyzes the CTP-dependent phosphorylation of riboflavin (vitamin B2) to form flavin mononucleotide (FMN). This is Riboflavin kinase from Methanococcus aeolicus (strain ATCC BAA-1280 / DSM 17508 / OCM 812 / Nankai-3).